The chain runs to 131 residues: Small ribosomal subunit protein uS8 (131 aa).

Belongs to the universal ribosomal protein uS8 family. In terms of assembly, part of the 30S ribosomal subunit. Contacts proteins S5 and S12.

In terms of biological role, one of the primary rRNA binding proteins, it binds directly to 16S rRNA central domain where it helps coordinate assembly of the platform of the 30S subunit. The chain is Small ribosomal subunit protein uS8 from Porphyromonas gingivalis (strain ATCC 33277 / DSM 20709 / CIP 103683 / JCM 12257 / NCTC 11834 / 2561).